Here is a 1040-residue protein sequence, read N- to C-terminus: Multidrug resistance protein MdtB (1040 aa).

The next 12 membrane-spanning stretches (helical) occupy residues 16–36, 347–367, 369–389, 396–416, 440–460, 472–492, 537–557, 863–883, 888–908, 911–931, 968–988, and 998–1018; these read FIMRPVATTLLMVAILLAGII, LMMAIALVVMIIYLFLRNIPA, IIPGVAVPLSLIGTFAVMVFL, LTLMALTIATGFVVDDAIVVI, IGFTIISLTFSLIAVLIPLLF, FAITLAVAILISAVVSLTLTP, WLTLSVALSTLLLSVLLWVFI, LGSTVWLIVAAVVAMYIVLGI, FIHPITILSTLPTAGVGALLA, IAGSELDVIAIIGIILLIGIV, ILMTTLAALLGALPLMLSTGV, and IGMVGGLIVSQVLTLFTTPVI.

Belongs to the resistance-nodulation-cell division (RND) (TC 2.A.6) family. MdtB subfamily. In terms of assembly, part of a tripartite efflux system composed of MdtA, MdtB and MdtC. MdtB forms a heteromultimer with MdtC.

Its subcellular location is the cell inner membrane. In terms of biological role, the MdtABC tripartite complex confers resistance against novobiocin and deoxycholate. In Escherichia coli (strain 55989 / EAEC), this protein is Multidrug resistance protein MdtB.